We begin with the raw amino-acid sequence, 165 residues long: MAILTIEELAERLPPYQAVAGLDLGTKTIGLSVSDLGRRFATPRDVIRRVKFGIDAQALLFFAEKEKVAAFVIGLPVNMDGSEGPRCQATRAFVRTMGERTDIPSVLWDERLSTVAAERVLIEMDVSRKKRADRIDSAAASFILQGALDRLALLARGASGDRDAP.

This sequence belongs to the YqgF nuclease family.

Its subcellular location is the cytoplasm. In terms of biological role, could be a nuclease involved in processing of the 5'-end of pre-16S rRNA. This Sinorhizobium medicae (strain WSM419) (Ensifer medicae) protein is Putative pre-16S rRNA nuclease.